The following is a 589-amino-acid chain: METKSSTSLPAKKLRQPIVCVLGHVDHGKTTLLDIIRGTAVANKEPGGITQRIAATTVDINKILKATEKLNNKGMKIPGLLFIDTPGHVAFSNMRARGGALADIAVLVIDINEGIMPQTVESIDILKKFKTPFIIAANKIDLIPFFTDVKTNLFTEFIRKQRQEYVNELDARIYNIVNKLYEYGLNSDRFDRISDFTKTIAIVPVSAKKNIGVPEILMVLAGLAQRFLESEIEYKDINGHATIIEVRREESAGIALDAVLYQGTISVGDTVAVNTKTGPVTTKVKALFVNTGKSQRSLKEVETVSAAEGIRVLISDKLDVISGSPLIVVKGNMEQVMKEIEEASKVDIPLDENGIYVKAEAIGSLEAISYELNKQGIKIRAAAVGDITKRDVMDVQTLQDPLNRIIIGFNVSILPEAKDAIESSDVGVITGDIIYKIVEDTQKWIEERKKQLSQKRKEAMPVPAKIRILPQYIFRASKPVIVGIRVETGQIKVGDNLIRSDGKYAGTIKSIRNDEVSVRYQDAPAEVAVAIDNVTLNRQIFPDDVLYVDIPESVVKELRKAPMEKEIMDTLEEIIKIKRKENPFWGTKV.

Residues 14-231 (LRQPIVCVLG…GLAQRFLESE (218 aa)) enclose the tr-type G domain. The G1 stretch occupies residues 23–30 (GHVDHGKT). A GTP-binding site is contributed by 23 to 30 (GHVDHGKT). A G2 region spans residues 48-52 (GITQR). A G3 region spans residues 84-87 (DTPG). GTP is bound by residues 84 to 88 (DTPGH) and 138 to 141 (NKID). The interval 138–141 (NKID) is G4. The interval 206 to 208 (SAK) is G5.

Belongs to the TRAFAC class translation factor GTPase superfamily. Classic translation factor GTPase family. IF-2 subfamily.

Functionally, function in general translation initiation by promoting the binding of the formylmethionine-tRNA to ribosomes. Seems to function along with eIF-2. The polypeptide is Probable translation initiation factor IF-2 (Thermoplasma volcanium (strain ATCC 51530 / DSM 4299 / JCM 9571 / NBRC 15438 / GSS1)).